A 334-amino-acid chain; its full sequence is Anthranilate phosphoribosyltransferase (334 aa).

5-phospho-alpha-D-ribose 1-diphosphate-binding positions include Gly79, 82–83, Ser87, 89–92, 107–115, and Ser119; these read GD, NIST, and KHGNRSISS. Gly79 lines the anthranilate pocket. Ser91 is a binding site for Mg(2+). Asn110 provides a ligand contact to anthranilate. Arg165 provides a ligand contact to anthranilate. Residues Asp224 and Glu225 each coordinate Mg(2+).

The protein belongs to the anthranilate phosphoribosyltransferase family. Homodimer. Mg(2+) serves as cofactor.

It carries out the reaction N-(5-phospho-beta-D-ribosyl)anthranilate + diphosphate = 5-phospho-alpha-D-ribose 1-diphosphate + anthranilate. Its pathway is amino-acid biosynthesis; L-tryptophan biosynthesis; L-tryptophan from chorismate: step 2/5. In terms of biological role, catalyzes the transfer of the phosphoribosyl group of 5-phosphorylribose-1-pyrophosphate (PRPP) to anthranilate to yield N-(5'-phosphoribosyl)-anthranilate (PRA). The sequence is that of Anthranilate phosphoribosyltransferase from Streptococcus gordonii (strain Challis / ATCC 35105 / BCRC 15272 / CH1 / DL1 / V288).